A 618-amino-acid polypeptide reads, in one-letter code: Grainyhead-like protein 1 homolog (618 aa).

The segment at 1 to 91 is transcription activation; the sequence is MTQEYDNKRP…EVEHPEPDHS (91 aa). Basic and acidic residues predominate over residues 74-92; it reads RRSSTAKPEVEHPEPDHSK. The tract at residues 74-94 is disordered; that stretch reads RRSSTAKPEVEHPEPDHSKRN. Thr208 carries the post-translational modification Phosphothreonine. The region spanning 248–474 is the Grh/CP2 DB domain; the sequence is SGNNFEYTLE…DLDTQPVLFI (227 aa). 2 interaction with DNA regions span residues 380–389 and 427–430; these read TDFSSQKGVK and RKIR.

Belongs to the grh/CP2 family. Grainyhead subfamily. Binds DNA as homodimer. Homodimer, also forms heterodimers with GRHL2 or GRHL3. In terms of processing, methylation at Arg-9 and Lys-116 may be involved in regulating transcriptional activation. In terms of tissue distribution, isoform 1 is highly expressed in brain, pancreas, tonsil, placenta and kidney. Isoform 2 is highly expressed in brain and liver. Expressed at very low levels in non-steroidogenic cells.

It is found in the nucleus. Its function is as follows. Transcription factor involved in epithelial development. Binds directly to the consensus DNA sequence 5'-AACCGGTT-3'. Important regulator of DSG1 in the context of hair anchorage and epidermal differentiation, participates in the maintenance of the skin barrier. There is no genetic interaction with GRHL3, nor functional cooperativity due to diverse target gene selectivity during epithelia development. May play a role in regulating glucose homeostasis and insulin signaling. In terms of biological role, functions as a transcription activator. Functionally, may function as a repressor in tissues where both isoform 1 and isoform 2 are expressed. This is Grainyhead-like protein 1 homolog from Homo sapiens (Human).